Here is a 173-residue protein sequence, read N- to C-terminus: UPF0316 protein Bsph_0745 (173 aa).

The next 3 helical transmembrane spans lie at 4-24 (IVLI…RTIF), 31-51 (FLAA…LSLV), and 58-78 (MLAM…GAKI).

It belongs to the UPF0316 family.

Its subcellular location is the cell membrane. This is UPF0316 protein Bsph_0745 from Lysinibacillus sphaericus (strain C3-41).